Here is a 677-residue protein sequence, read N- to C-terminus: Probable sulfate transporter 4.2 (677 aa).

Residues 1 to 83 (MSLAVKDLST…RTYRWHQYFK (83 aa)) are Cytoplasmic-facing. The helical transmembrane segment at 84–104 (LDLMAGITVGIMLVPQAMSYA) threads the bilayer. The Extracellular segment spans residues 105-108 (RLAG). A helical transmembrane segment spans residues 109 to 129 (LQPIYGLYSSFVPVFVYAVFG). The Cytoplasmic segment spans residues 130–133 (SSRQ). The chain crosses the membrane as a helical span at residues 134–154 (LAVGPVALVSLLVSNALSGIV). The Extracellular portion of the chain corresponds to 155-161 (DPSEELY). The helical transmembrane segment at 162-182 (TELAILLALMVGIFESIMGFL) threads the bilayer. At 183 to 189 (RLGWLIR) the chain is on the cytoplasmic side. Residues 190 to 210 (FISHSVISGFTTASAVVIGLS) form a helical membrane-spanning segment. The Extracellular portion of the chain corresponds to 211-241 (QLKYFLGYSVSRSSKIMPVIDSIIAGADQFK). A helical transmembrane segment spans residues 242–262 (WPPFLLGCTILVILLVMKHVG). Topologically, residues 263–269 (KAKKELR) are cytoplasmic. A helical membrane pass occupies residues 270 to 290 (FIRAAGPLTGLALGTIIAKVF). The Extracellular portion of the chain corresponds to 291-318 (HPPSITLVGDIPQGLPKFSFPKSFDHAK). Residues 319–339 (LLLPTSALITGVAILESVGIA) traverse the membrane as a helical segment. At 340–355 (KALAAKNRYELDSNSE) the chain is on the cytoplasmic side. The helical transmembrane segment at 356–376 (LFGLGVANIFGSLFSAYPTTG) threads the bilayer. The Extracellular portion of the chain corresponds to 377–392 (SFSRSAVNSESEAKTG). Residues 393 to 413 (LSGLVTGIIIGCSLLFLTPMF) form a helical membrane-spanning segment. The Cytoplasmic segment spans residues 414-420 (KFIPQCA). The helical transmembrane segment at 421-441 (LAAIVISAVSGLVDYEGAIFL) threads the bilayer. Residues 442–459 (WRVDKRDFTLWTITSTTT) are Extracellular-facing. The chain crosses the membrane as a helical span at residues 460–480 (LFFGIEIGVLIGVGFSLAFVI). The Cytoplasmic portion of the chain corresponds to 481 to 677 (HESANPHIAV…LEEPLLSREK (197 aa)). The 125-residue stretch at 505–629 (QYPEAYTYNG…VRVHDAVQVC (125 aa)) folds into the STAS domain.

Belongs to the SLC26A/SulP transporter (TC 2.A.53) family.

It localises to the membrane. In terms of biological role, h(+)/sulfate cotransporter that may play a role in the regulation of sulfate assimilation. This chain is Probable sulfate transporter 4.2 (SULTR4;2), found in Arabidopsis thaliana (Mouse-ear cress).